The sequence spans 407 residues: Imidazolonepropionase (407 aa).

Residues histidine 74 and histidine 76 each coordinate Fe(3+). Residues histidine 74 and histidine 76 each coordinate Zn(2+). Arginine 83, tyrosine 146, and histidine 179 together coordinate 4-imidazolone-5-propanoate. Tyrosine 146 serves as a coordination point for N-formimidoyl-L-glutamate. Residue histidine 244 coordinates Fe(3+). Zn(2+) is bound at residue histidine 244. Residue glutamine 247 participates in 4-imidazolone-5-propanoate binding. Residue aspartate 319 coordinates Fe(3+). Residue aspartate 319 participates in Zn(2+) binding. Asparagine 321 and glycine 323 together coordinate N-formimidoyl-L-glutamate. Residue threonine 324 participates in 4-imidazolone-5-propanoate binding.

Belongs to the metallo-dependent hydrolases superfamily. HutI family. Zn(2+) is required as a cofactor. Requires Fe(3+) as cofactor.

Its subcellular location is the cytoplasm. It catalyses the reaction 4-imidazolone-5-propanoate + H2O = N-formimidoyl-L-glutamate. It functions in the pathway amino-acid degradation; L-histidine degradation into L-glutamate; N-formimidoyl-L-glutamate from L-histidine: step 3/3. Catalyzes the hydrolytic cleavage of the carbon-nitrogen bond in imidazolone-5-propanoate to yield N-formimidoyl-L-glutamate. It is the third step in the universal histidine degradation pathway. This chain is Imidazolonepropionase, found in Salmonella typhi.